Reading from the N-terminus, the 1535-residue chain is Putative protein TIC 214 C-terminal part (1535 aa).

3 disordered regions span residues 264–283 (ENQKKNGKQPVDTIKNNSND), 312–333 (EQQEEENPEESTGNPGIRSRKA), and 1263–1282 (DYKESDIQKPRTKAQSKNNK).

Belongs to the TIC214 family. Part of the Tic complex.

The protein resides in the plastid. It is found in the chloroplast. In terms of biological role, involved in protein precursor import into chloroplasts. May be part of an intermediate translocation complex acting as a protein-conducting channel at the inner envelope. The polypeptide is Putative protein TIC 214 C-terminal part (Piper cenocladum (Ant piper)).